The chain runs to 133 residues: Large ribosomal subunit protein uL15 (133 aa).

The segment at 1–60 (MALENLKPAQGSTKDRKRVGRGQGSGMGKTSTRGGKGQTARTGYKAKRGFEGGQQPLQRR) is disordered.

The protein belongs to the universal ribosomal protein uL15 family. Part of the 50S ribosomal subunit.

Functionally, binds to the 23S rRNA. In Wolinella succinogenes (strain ATCC 29543 / DSM 1740 / CCUG 13145 / JCM 31913 / LMG 7466 / NCTC 11488 / FDC 602W) (Vibrio succinogenes), this protein is Large ribosomal subunit protein uL15.